Here is a 1492-residue protein sequence, read N- to C-terminus: ATP-binding cassette sub-family C member 10 (1492 aa).

9 consecutive transmembrane segments (helical) span residues 32 to 52 (LVLS…YLGT), 70 to 90 (LAAS…VALP), 102 to 122 (VLAG…LWVL), 133 to 153 (PLAL…TVLW), 172 to 192 (LCLL…WAAP), 293 to 313 (LVGT…VGFL), 320 to 340 (LSHG…GAVL), 391 to 411 (LLNF…LAIT), and 414 to 434 (LLYQ…LLLV). The ABC transmembrane type-1 1 domain maps to 285-563 (YLALGLLKLV…FPWVINGLLE (279 aa)). T463 carries the post-translational modification Phosphothreonine. S467 carries the phosphoserine modification. 2 consecutive transmembrane segments (helical) span residues 507 to 527 (VYLW…TYVL) and 538 to 558 (FTAL…PWVI). Positions 598–824 (LELHGALFSW…VQAVPKAWAE (227 aa)) constitute an ABC transporter 1 domain. 633–640 (GKVGCGKS) contributes to the ATP binding site. The segment at 825–860 (NGQESDSATAQSVQNPEKTKEGLEEEQSTSGRLLQE) is disordered. Over residues 826–840 (GQESDSATAQSVQNP) the composition is skewed to polar residues. Transmembrane regions (helical) follow at residues 875–895 (AYWK…LLLM), 933–953 (LFSP…VFPL), 974–994 (IAGV…AGTL), 1051–1071 (AGLL…LLLL), 1153–1173 (IRLQ…ALVQ), and 1182–1202 (GLVG…SGLV). Residues 885–1210 (ALAILFSLLL…LVSSFTQTEA (326 aa)) form the ABC transmembrane type-1 2 domain. The region spanning 1246 to 1479 (VEFQDVVLAY…PHSLFQQLLQ (234 aa)) is the ABC transporter 2 domain. 1280-1287 (GRTGSGKS) lines the ATP pocket.

The protein belongs to the ABC transporter superfamily. ABCC family. Conjugate transporter (TC 3.A.1.208) subfamily. In testis, localized to peritubular myoid cells, Leydig cells, along the basal membrane of Sertoli cells, moderately in the adluminal compartment of the seminiferous tubules, and in vascular endothelial cells. As to expression, specifically expressed in spleen. In terms of tissue distribution, widely expressed.

Its subcellular location is the cell membrane. The protein localises to the basolateral cell membrane. The protein resides in the basal cell membrane. The enzyme catalyses ATP + H2O + xenobioticSide 1 = ADP + phosphate + xenobioticSide 2.. It carries out the reaction an S-substituted glutathione(in) + ATP + H2O = an S-substituted glutathione(out) + ADP + phosphate + H(+). It catalyses the reaction 17beta-estradiol 17-O-(beta-D-glucuronate)(in) + ATP + H2O = 17beta-estradiol 17-O-(beta-D-glucuronate)(out) + ADP + phosphate + H(+). The catalysed reaction is leukotriene C4(in) + ATP + H2O = leukotriene C4(out) + ADP + phosphate + H(+). ATP-dependent transporter of the ATP-binding cassette (ABC) family that actively extrudes physiological compounds, and xenobiotics from cells. Lipophilic anion transporter that mediates ATP-dependent transport of glucuronide conjugates such as estradiol-17-beta-o-glucuronide and GSH conjugates such as leukotriene C4 (LTC4). May contribute to regulate the transport of organic compounds in testes across the blood-testis-barrier. Mediates multidrug resistance (MDR) in cancer cells by preventing the intracellular accumulation of certain antitumor drugs, such as, docetaxel and paclitaxel. Does not transport glycocholic acid, taurocholic acid, MTX, folic acid, cAMP, or cGMP. This Homo sapiens (Human) protein is ATP-binding cassette sub-family C member 10 (ABCC10).